A 625-amino-acid polypeptide reads, in one-letter code: E3 ubiquitin-protein ligase synoviolin (625 aa).

Residues 1-4 lie on the Cytoplasmic side of the membrane; it reads MVRA. The chain crosses the membrane as a helical span at residues 5–25; it reads ALVTATSLALTGAVVAHAYFL. Residues 26–40 are Lumenal-facing; that stretch reads KHQFYPTVVYLTKSS. Residues 41–61 traverse the membrane as a helical segment; it reads PSMAVLYIQAFVLVFLLGKLM. Residues 62 to 98 lie on the Cytoplasmic side of the membrane; the sequence is RKVFFGQLRAAEMEHLIERSWYAVTETCLAFTVFRDD. Residues 99–119 traverse the membrane as a helical segment; that stretch reads FSPRFVALFTLLLFLKCFHWL. At 120-135 the chain is on the lumenal side; sequence AEDRVDFMERSPNISW. The chain crosses the membrane as a helical span at residues 136 to 156; that stretch reads VFHFRVLSLMVLLGVMDFLFV. The Cytoplasmic portion of the chain corresponds to 157–169; the sequence is NHACHSIITRGAS. The chain crosses the membrane as a helical span at residues 170–190; it reads VQLVFGFEYAILMTMVLTTFI. Topologically, residues 191-212 are lumenal; that stretch reads KYTLHTIDLQSENPWDNKAVYM. Residues 213–235 form a helical membrane-spanning segment; sequence LYTELFTGFIKVLLYMAFMTIMI. Positions 236–270 are interaction with p53/TP53; sequence KVHTFPLFAIRPMYLAMRQFKKAVTDAIMSRRAIR. At 236 to 625 the chain is on the cytoplasmic side; the sequence is KVHTFPLFAI…GNLLKLASVN (390 aa). Residues Cys291, Cys294, Cys307, His309, His312, Cys315, Cys326, and Cys329 each coordinate Zn(2+). Residues 291-330 form an RING-type; atypical zinc finger; sequence CIICREEMVTGAKKLPCNHIFHSSCLRSWFQRQQTCPTCR. 4 disordered regions span residues 337-361, 390-434, 462-487, and 523-625; these read SQPNQTPAPPAAQAPAPPAPANAPI, PPPA…SAAP, FMSSMPPPPSSLSSMSEAELRELEQE, and LSPP…ASVN. The segment covering 342-361 has biased composition (pro residues); it reads TPAPPAAQAPAPPAPANAPI. The span at 423-434 shows a compositional bias: low complexity; it reads AQSTAEAASAAP. A compositionally biased stretch (pro residues) spans 462-471; it reads FMSSMPPPPS. The segment covering 523-564 has biased composition (polar residues); it reads LSPPRSETNTGETSESANVESSPSTANTETAGQEIQSQSGES.

This sequence belongs to the HRD1 family. In terms of assembly, homodimer.

The protein localises to the endoplasmic reticulum membrane. The catalysed reaction is S-ubiquitinyl-[E2 ubiquitin-conjugating enzyme]-L-cysteine + [acceptor protein]-L-lysine = [E2 ubiquitin-conjugating enzyme]-L-cysteine + N(6)-ubiquitinyl-[acceptor protein]-L-lysine.. It participates in protein modification; protein ubiquitination. Functionally, E3 ubiquitin-protein ligase which accepts ubiquitin specifically from endoplasmic reticulum-associated UBC7 E2 ligase and transfers it to substrates, promoting their degradation. Component of the endoplasmic reticulum quality control (ERQC) system also called ER-associated degradation (ERAD) involved in ubiquitin-dependent degradation of misfolded endoplasmic reticulum proteins. Also promotes the degradation of normal but naturally short-lived proteins. Protects cells from ER stress-induced apoptosis. Sequesters p53 in the cytoplasm and promotes its degradation, thereby negatively regulating its biological function in transcription, cell cycle regulation and apoptosis. The chain is E3 ubiquitin-protein ligase synoviolin (syvn1) from Danio rerio (Zebrafish).